The primary structure comprises 437 residues: MASSSSFTYYCPPSSSPVWSEPLYSLRPEHARERLQDDSVETVTSIEQAKVEEKIQEVFSSYKFNHLVPRLVLQREKHFHYLKRGLRQLTDAYECLDASRPWLCYWILHSLELLDEPIPQIVATDVCQFLELCQSPDGGFGGGPGQYPHLAPTYAAVNALCIIGTEEAYNVINREKLLQYLYSLKQPDGSFLMHVGGEVDVRSAYCAASVASLTNIITPDLFEGTAEWIARCQNWEGGIGGVPGMEAHGGYTFCGLAALVILKKERSLNLKSLLQWVTSRQMRFEGGFQGRCNKLVDGCYSFWQAGLLPLLHRALHAQGDPALSMSHWMFHQQALQEYILMCCQCPAGGLLDKPGKSRDFYHTCYCLSGLSIAQHFGSGAMLHDVVMGVPENVLQPTHPVYNIGPDKVIQATTHFLQKPVPGFEECEDAVTSDPATD.

PFTB repeat units follow at residues 123–164 (ATDV…CIIG), 174–215 (REKL…SLTN), 222–263 (FEGT…VILK), 270–312 (LKSL…PLLH), and 332–374 (QQAL…SIAQ). (2E,6E)-farnesyl diphosphate is bound by residues 248–251 (HGGY) and 291–294 (RCNK). Residues D297 and C299 each contribute to the Zn(2+) site. Residue 300–303 (YSFW) coordinates (2E,6E)-farnesyl diphosphate. H362 contacts Zn(2+). At S432 the chain carries Phosphoserine. A Phosphothreonine modification is found at T436.

The protein belongs to the protein prenyltransferase subunit beta family. Heterodimer of FNTA and FNTB. The cofactor is Zn(2+).

It catalyses the reaction L-cysteinyl-[protein] + (2E,6E)-farnesyl diphosphate = S-(2E,6E)-farnesyl-L-cysteinyl-[protein] + diphosphate. In terms of biological role, essential subunit of the farnesyltransferase complex. Catalyzes the transfer of a farnesyl moiety from farnesyl diphosphate to a cysteine at the fourth position from the C-terminus of several proteins having the C-terminal sequence Cys-aliphatic-aliphatic-X. In Rattus norvegicus (Rat), this protein is Protein farnesyltransferase subunit beta (Fntb).